We begin with the raw amino-acid sequence, 316 residues long: Acetaldehyde dehydrogenase (316 aa).

11 to 14 (SGNI) is an NAD(+) binding site. The Acyl-thioester intermediate role is filled by Cys131. NAD(+)-binding positions include 162 to 170 (SAGPGTRAN) and Asn289.

This sequence belongs to the acetaldehyde dehydrogenase family. Interacts with MhpE.

The enzyme catalyses acetaldehyde + NAD(+) + CoA = acetyl-CoA + NADH + H(+). It participates in aromatic compound metabolism; 3-phenylpropanoate degradation. Its function is as follows. Catalyzes the conversion of acetaldehyde to acetyl-CoA, using NAD(+) and coenzyme A. Is the final enzyme in the meta-cleavage pathway for the degradation of aromatic compounds. The protein is Acetaldehyde dehydrogenase of Escherichia coli O157:H7.